A 122-amino-acid polypeptide reads, in one-letter code: Small ribosomal subunit protein uS13 (122 aa).

The span at 97-114 (PVRGQRTHTNAKTRKGKS) shows a compositional bias: basic residues. The disordered stretch occupies residues 97–122 (PVRGQRTHTNAKTRKGKSRLPIAGKE).

This sequence belongs to the universal ribosomal protein uS13 family. Part of the 30S ribosomal subunit. Forms a loose heterodimer with protein S19. Forms two bridges to the 50S subunit in the 70S ribosome.

Its function is as follows. Located at the top of the head of the 30S subunit, it contacts several helices of the 16S rRNA. In the 70S ribosome it contacts the 23S rRNA (bridge B1a) and protein L5 of the 50S subunit (bridge B1b), connecting the 2 subunits; these bridges are implicated in subunit movement. Contacts the tRNAs in the A and P-sites. This Wolbachia sp. subsp. Brugia malayi (strain TRS) protein is Small ribosomal subunit protein uS13.